Here is a 571-residue protein sequence, read N- to C-terminus: UvrABC system protein C (571 aa).

Residues 15–93 form the GIY-YIG domain; it reads TSPGVYLWKD…IDRYNPEFNI (79 aa). The 36-residue stretch at 184 to 219 folds into the UVR domain; sequence NNYINELTNKMHQAANNMQFELALFLRDGLTYLKKL.

The protein belongs to the UvrC family. In terms of assembly, interacts with UvrB in an incision complex.

It localises to the cytoplasm. Its function is as follows. The UvrABC repair system catalyzes the recognition and processing of DNA lesions. UvrC both incises the 5' and 3' sides of the lesion. The N-terminal half is responsible for the 3' incision and the C-terminal half is responsible for the 5' incision. This Mycoplasmopsis bovis (strain ATCC 25523 / DSM 22781 / NCTC 10131 / PG45) (Mycoplasma bovis) protein is UvrABC system protein C.